A 189-amino-acid chain; its full sequence is Peptidyl-tRNA hydrolase (189 aa).

Tyrosine 15 contributes to the tRNA binding site. Catalysis depends on histidine 20, which acts as the Proton acceptor. 3 residues coordinate tRNA: phenylalanine 66, asparagine 68, and asparagine 114.

This sequence belongs to the PTH family. Monomer.

The protein resides in the cytoplasm. The enzyme catalyses an N-acyl-L-alpha-aminoacyl-tRNA + H2O = an N-acyl-L-amino acid + a tRNA + H(+). In terms of biological role, hydrolyzes ribosome-free peptidyl-tRNAs (with 1 or more amino acids incorporated), which drop off the ribosome during protein synthesis, or as a result of ribosome stalling. Functionally, catalyzes the release of premature peptidyl moieties from peptidyl-tRNA molecules trapped in stalled 50S ribosomal subunits, and thus maintains levels of free tRNAs and 50S ribosomes. The chain is Peptidyl-tRNA hydrolase from Acidithiobacillus ferrooxidans (strain ATCC 23270 / DSM 14882 / CIP 104768 / NCIMB 8455) (Ferrobacillus ferrooxidans (strain ATCC 23270)).